A 366-amino-acid chain; its full sequence is Alanine racemase (366 aa).

The active-site Proton acceptor; specific for D-alanine is Lys40. Lys40 bears the N6-(pyridoxal phosphate)lysine mark. Residue Arg136 participates in substrate binding. The Proton acceptor; specific for L-alanine role is filled by Tyr263. Met310 is a binding site for substrate.

The protein belongs to the alanine racemase family. Pyridoxal 5'-phosphate is required as a cofactor.

It catalyses the reaction L-alanine = D-alanine. The protein operates within amino-acid biosynthesis; D-alanine biosynthesis; D-alanine from L-alanine: step 1/1. Its function is as follows. Catalyzes the interconversion of L-alanine and D-alanine. May also act on other amino acids. The chain is Alanine racemase (alr) from Streptococcus pyogenes serotype M6 (strain ATCC BAA-946 / MGAS10394).